The chain runs to 425 residues: Serine--tRNA ligase (425 aa).

233 to 235 (TAE) contacts L-serine. 264-266 (RAE) contributes to the ATP binding site. Position 287 (glutamate 287) interacts with L-serine. ATP is bound at residue 351–354 (EISS). Serine 387 lines the L-serine pocket.

This sequence belongs to the class-II aminoacyl-tRNA synthetase family. Type-1 seryl-tRNA synthetase subfamily. Homodimer. The tRNA molecule binds across the dimer.

It is found in the cytoplasm. It catalyses the reaction tRNA(Ser) + L-serine + ATP = L-seryl-tRNA(Ser) + AMP + diphosphate + H(+). It carries out the reaction tRNA(Sec) + L-serine + ATP = L-seryl-tRNA(Sec) + AMP + diphosphate + H(+). It participates in aminoacyl-tRNA biosynthesis; selenocysteinyl-tRNA(Sec) biosynthesis; L-seryl-tRNA(Sec) from L-serine and tRNA(Sec): step 1/1. Functionally, catalyzes the attachment of serine to tRNA(Ser). Is also able to aminoacylate tRNA(Sec) with serine, to form the misacylated tRNA L-seryl-tRNA(Sec), which will be further converted into selenocysteinyl-tRNA(Sec). The sequence is that of Serine--tRNA ligase from Clostridium perfringens (strain ATCC 13124 / DSM 756 / JCM 1290 / NCIMB 6125 / NCTC 8237 / Type A).